A 263-amino-acid polypeptide reads, in one-letter code: Probable esterase PIR7A (263 aa).

The Acyl-ester intermediate role is filled by S82. Active-site charge relay system residues include D213 and H241.

It belongs to the AB hydrolase superfamily.

This is Probable esterase PIR7A (PIR7A) from Oryza sativa subsp. indica (Rice).